Consider the following 297-residue polypeptide: Aspartate carbamoyltransferase catalytic subunit (297 aa).

The carbamoyl phosphate site is built by R51 and T52. An L-aspartate-binding site is contributed by K79. Residues R101, H129, and Q132 each contribute to the carbamoyl phosphate site. The L-aspartate site is built by R162 and R216. Carbamoyl phosphate contacts are provided by G257 and P258.

The protein belongs to the aspartate/ornithine carbamoyltransferase superfamily. ATCase family. In terms of assembly, heterododecamer (2C3:3R2) of six catalytic PyrB chains organized as two trimers (C3), and six regulatory PyrI chains organized as three dimers (R2).

It catalyses the reaction carbamoyl phosphate + L-aspartate = N-carbamoyl-L-aspartate + phosphate + H(+). It participates in pyrimidine metabolism; UMP biosynthesis via de novo pathway; (S)-dihydroorotate from bicarbonate: step 2/3. Its function is as follows. Catalyzes the condensation of carbamoyl phosphate and aspartate to form carbamoyl aspartate and inorganic phosphate, the committed step in the de novo pyrimidine nucleotide biosynthesis pathway. The protein is Aspartate carbamoyltransferase catalytic subunit of Myxococcus xanthus (strain DK1622).